The chain runs to 263 residues: Tryptophan synthase alpha chain (263 aa).

Active-site proton acceptor residues include Glu46 and Asp57.

Belongs to the TrpA family. Tetramer of two alpha and two beta chains.

It carries out the reaction (1S,2R)-1-C-(indol-3-yl)glycerol 3-phosphate + L-serine = D-glyceraldehyde 3-phosphate + L-tryptophan + H2O. It participates in amino-acid biosynthesis; L-tryptophan biosynthesis; L-tryptophan from chorismate: step 5/5. In terms of biological role, the alpha subunit is responsible for the aldol cleavage of indoleglycerol phosphate to indole and glyceraldehyde 3-phosphate. In Bacteroides fragilis (strain ATCC 25285 / DSM 2151 / CCUG 4856 / JCM 11019 / LMG 10263 / NCTC 9343 / Onslow / VPI 2553 / EN-2), this protein is Tryptophan synthase alpha chain.